Consider the following 642-residue polypeptide: Threonine--tRNA ligase (642 aa).

Residues 1–61 form the TGS domain; the sequence is MPVITLPDGS…ETDAELSIIT (61 aa). A catalytic region spans residues 243 to 534; it reads DHRKIGKQLD…LIEEYAGRFP (292 aa). Zn(2+) contacts are provided by cysteine 334, histidine 385, and histidine 511.

Belongs to the class-II aminoacyl-tRNA synthetase family. Homodimer. Zn(2+) serves as cofactor.

The protein resides in the cytoplasm. The enzyme catalyses tRNA(Thr) + L-threonine + ATP = L-threonyl-tRNA(Thr) + AMP + diphosphate + H(+). Catalyzes the attachment of threonine to tRNA(Thr) in a two-step reaction: L-threonine is first activated by ATP to form Thr-AMP and then transferred to the acceptor end of tRNA(Thr). Also edits incorrectly charged L-seryl-tRNA(Thr). The chain is Threonine--tRNA ligase from Shewanella sp. (strain ANA-3).